Here is a 597-residue protein sequence, read N- to C-terminus: Elongation factor 4 (597 aa).

The region spanning 2–184 (QNIRNFSIIA…DIVKKIPAPE (183 aa)) is the tr-type G domain. GTP is bound by residues 14–19 (DHGKST) and 131–134 (NKID).

This sequence belongs to the TRAFAC class translation factor GTPase superfamily. Classic translation factor GTPase family. LepA subfamily.

It localises to the cell inner membrane. The enzyme catalyses GTP + H2O = GDP + phosphate + H(+). In terms of biological role, required for accurate and efficient protein synthesis under certain stress conditions. May act as a fidelity factor of the translation reaction, by catalyzing a one-codon backward translocation of tRNAs on improperly translocated ribosomes. Back-translocation proceeds from a post-translocation (POST) complex to a pre-translocation (PRE) complex, thus giving elongation factor G a second chance to translocate the tRNAs correctly. Binds to ribosomes in a GTP-dependent manner. This Haemophilus ducreyi (strain 35000HP / ATCC 700724) protein is Elongation factor 4.